Here is a 255-residue protein sequence, read N- to C-terminus: 2-dehydro-3,6-dideoxy-6-sulfogluconate aldolase (255 aa).

The active-site Proton acceptor is the H38. A divalent metal cation-binding residues include E141 and D167.

It belongs to the HpcH/HpaI aldolase family. Homohexamer; trimer of dimers. A divalent metal cation serves as cofactor.

It catalyses the reaction 2-dehydro-3,6-dideoxy-6-sulfo-D-gluconate = (2S)-3-sulfolactaldehyde + pyruvate. Its function is as follows. Catalyzes the retro-aldol cleavage of 2-dehydro-3,6-dideoxy-6-sulfo-D-gluconate to (2S)-3-sulfolactaldehyde and pyruvate. Is involved in a degradation pathway of sulfoquinovose (SQ) that allows P.putida SQ1 to use SQ as the sole carbon and energy source for growth. The chain is 2-dehydro-3,6-dideoxy-6-sulfogluconate aldolase from Pseudomonas putida (Arthrobacter siderocapsulatus).